The chain runs to 93 residues: Small ribosomal subunit protein uS19 (93 aa).

2 disordered regions span residues 1-25 and 74-93; these read MPRSLKKGPFVDGHLQKKVDDQNTK and FAPTRTYRGHDKDDRKARRR. Basic and acidic residues-rich tracts occupy residues 14–23 and 81–93; these read HLQKKVDDQN and RGHDKDDRKARRR.

Belongs to the universal ribosomal protein uS19 family.

Functionally, protein S19 forms a complex with S13 that binds strongly to the 16S ribosomal RNA. This chain is Small ribosomal subunit protein uS19, found in Beutenbergia cavernae (strain ATCC BAA-8 / DSM 12333 / CCUG 43141 / JCM 11478 / NBRC 16432 / NCIMB 13614 / HKI 0122).